Here is an 815-residue protein sequence, read N- to C-terminus: MLPSSICSMGQIPRTSPHYYGMLPKQMSKGHPPMVTRAVGGVEKGEVGGNVRSLQVMHSKELQAKIRKQLQRVELSPSLYDTAWVAMVPERSSSQAPCYPQCIEWILQNQHDDGSWGINSSSLSVNKDILLSTLACVVALKKWNAGSYHIKRGLNFVGRNFSVAMDVQNIAPVGFNVTFSGLITLASGMGLQLPVWQTDIDEIFHLRKIELERDSGGTISARKAFMAYVAEGFGSLQDWDQVMAYQRKNGSLFNSPSTTAAAAIHTFNDRTLNYLDSLTNKFGGPVPAMYPQNIYSQLCTVDALERTGISQKFAREIRDILDTTYRSWLHNEEEVMLDIPTCAMAFRLLRTHGYDITSDEMAHFSEQSSFDDSIHGYLNDTKTLLELFKTSQIRFSCEDLVLENIGTWSAKLLKQQLLSNKLSTSAQSEVEYVLKFPLHSTLDRLEHRRNIEQFKVEGSKVLKSGYCGSHSNEEILALAVDYFHSSQSVYQQELKYFESWVKQCRLDELKFARVMPLIVHFSSAATIFAPELADARMVLSQTCMLITVYDDFFDCPEISREEKENYIALIEKWDNHAEIGFCSKNVEIVFYAVYNTYKQIGEKAALKQNRSIMDQLVEDLVSSAKAMMVEADWTATKYIPATMEEYMSNAEVSGAFASFVCPPLYFLGLKLSEEDVKSHEYTQLLKLTNVIGRLQNDSQTYRKEILAGKVNSVLLRALTDSGNTSPESIEAAKEIVNRDAESSMVEMRSLVFSEGGPIPRPCKDRFWEMCKIVFYFYSEDDAYRTPKETMSSARAVILDPLRLIPPPSCPETLSS.

Residues 1–38 (MLPSSICSMGQIPRTSPHYYGMLPKQMSKGHPPMVTRA) constitute a chloroplast transit peptide. Mg(2+) contacts are provided by aspartate 550, aspartate 554, asparagine 696, threonine 700, and glutamate 704. Residues 550 to 554 (DDFFD) carry the DDXXD motif motif.

It belongs to the terpene synthase family. Mg(2+) serves as cofactor.

It is found in the plastid. It localises to the chloroplast. The enzyme catalyses ent-copalyl diphosphate = ent-sandaracopimara-8(14),15-diene + diphosphate. It carries out the reaction 9alpha-copalyl diphosphate = (12E)-9alpha-labda-8(17),12,14-triene + diphosphate. In terms of biological role, involved in the biosynthesis of oryzalexin A-F phytoalexins. Catalyzes the conversion of ent-copalyl diphosphate to the phytoalexin precursor ent-sandaracopimaradiene. This is Ent-sandaracopimara-8(14),15-diene synthase, chloroplastic from Oryza sativa subsp. japonica (Rice).